Consider the following 784-residue polypeptide: DNA repair and recombination protein RAD54-like (784 aa).

Residues Met-1–Ala-54 are disordered. Residues Arg-2–Gln-9 form a required for chromatin remodeling, strand pairing activities and coupling of ATPase activity region. Residue Ser-20 is modified to Phosphoserine. The residue at position 22 (Thr-22) is a Phosphothreonine. A compositionally biased stretch (basic and acidic residues) spans Glu-36–Arg-47. The Helicase ATP-binding domain maps to Glu-172–Glu-346. Asp-185–Thr-192 contacts ATP. Residues Asp-297–His-300 carry the DEGH box motif. Positions Leu-503–Thr-660 constitute a Helicase C-terminal domain. The segment at Glu-751–Phe-784 is disordered. Residues Asp-775–Phe-784 are compositionally biased toward acidic residues.

The protein belongs to the SNF2/RAD54 helicase family. In terms of assembly, interacts (via N-terminus) with spn-A/Rad51.

It is found in the nucleus. Involved in mitotic DNA repair and meiotic recombination. Functions in the recombinational DNA repair pathway. Essential for interhomolog gene conversion (GC), but may have a less important role in intersister GC than spn-A/Rad51. In the presence of DNA, spn-A/Rad51 enhances the ATPase activity of okr/Rad54. The sequence is that of DNA repair and recombination protein RAD54-like from Drosophila yakuba (Fruit fly).